We begin with the raw amino-acid sequence, 311 residues long: Malate dehydrogenase (311 aa).

NAD(+)-binding positions include 7 to 13 (GAAGGIG) and Asp34. Residues Arg81 and Arg87 each contribute to the substrate site. Residues Asn94 and 117–119 (ITN) each bind NAD(+). Residues Asn119 and Arg153 each contribute to the substrate site. His177 acts as the Proton acceptor in catalysis. An NAD(+)-binding site is contributed by Met227.

The protein belongs to the LDH/MDH superfamily. MDH type 1 family. In terms of assembly, homodimer.

It carries out the reaction (S)-malate + NAD(+) = oxaloacetate + NADH + H(+). In terms of biological role, catalyzes the reversible oxidation of malate to oxaloacetate. The chain is Malate dehydrogenase from Vibrio parahaemolyticus serotype O3:K6 (strain RIMD 2210633).